The following is a 72-amino-acid chain: MSKDDSIEFEGSVSETLPNTTFRVKLENGYEIIAHISGRMRKNYIRILTGDRVKVEMTPYDLTKGRITYRMK.

The region spanning 1-72 is the S1-like domain; sequence MSKDDSIEFE…TKGRITYRMK (72 aa).

The protein belongs to the IF-1 family. Component of the 30S ribosomal translation pre-initiation complex which assembles on the 30S ribosome in the order IF-2 and IF-3, IF-1 and N-formylmethionyl-tRNA(fMet); mRNA recruitment can occur at any time during PIC assembly.

The protein resides in the cytoplasm. One of the essential components for the initiation of protein synthesis. Stabilizes the binding of IF-2 and IF-3 on the 30S subunit to which N-formylmethionyl-tRNA(fMet) subsequently binds. Helps modulate mRNA selection, yielding the 30S pre-initiation complex (PIC). Upon addition of the 50S ribosomal subunit IF-1, IF-2 and IF-3 are released leaving the mature 70S translation initiation complex. This chain is Translation initiation factor IF-1, found in Xanthomonas campestris pv. campestris (strain 8004).